A 738-amino-acid chain; its full sequence is Phosphoribosylformylglycinamidine synthase subunit PurL (738 aa).

His53 is a catalytic residue. ATP-binding residues include Tyr56 and Lys95. Glu97 provides a ligand contact to Mg(2+). Residues 98 to 101 (SHNH) and Arg120 each bind substrate. The Proton acceptor role is filled by His99. Position 121 (Asp121) interacts with Mg(2+). Gln244 provides a ligand contact to substrate. Asp274 is a Mg(2+) binding site. 318 to 320 (ESQ) is a substrate binding site. ATP-binding residues include Asp499 and Gly536. Asn537 contributes to the Mg(2+) binding site. Ser539 provides a ligand contact to substrate.

This sequence belongs to the FGAMS family. As to quaternary structure, monomer. Part of the FGAM synthase complex composed of 1 PurL, 1 PurQ and 2 PurS subunits.

Its subcellular location is the cytoplasm. The enzyme catalyses N(2)-formyl-N(1)-(5-phospho-beta-D-ribosyl)glycinamide + L-glutamine + ATP + H2O = 2-formamido-N(1)-(5-O-phospho-beta-D-ribosyl)acetamidine + L-glutamate + ADP + phosphate + H(+). It participates in purine metabolism; IMP biosynthesis via de novo pathway; 5-amino-1-(5-phospho-D-ribosyl)imidazole from N(2)-formyl-N(1)-(5-phospho-D-ribosyl)glycinamide: step 1/2. Part of the phosphoribosylformylglycinamidine synthase complex involved in the purines biosynthetic pathway. Catalyzes the ATP-dependent conversion of formylglycinamide ribonucleotide (FGAR) and glutamine to yield formylglycinamidine ribonucleotide (FGAM) and glutamate. The FGAM synthase complex is composed of three subunits. PurQ produces an ammonia molecule by converting glutamine to glutamate. PurL transfers the ammonia molecule to FGAR to form FGAM in an ATP-dependent manner. PurS interacts with PurQ and PurL and is thought to assist in the transfer of the ammonia molecule from PurQ to PurL. The protein is Phosphoribosylformylglycinamidine synthase subunit PurL of Lacticaseibacillus paracasei (strain ATCC 334 / BCRC 17002 / CCUG 31169 / CIP 107868 / KCTC 3260 / NRRL B-441) (Lactobacillus paracasei).